The following is an 841-amino-acid chain: Taste receptor type 1 member 1 (841 aa).

A signal peptide spans 1–20 (MLLCTARLVGLQLLISCCWA). Residues 21–567 (FACHSTESSP…VFLALREHTS (547 aa)) lie on the Extracellular side of the membrane. Residues Asn87, Asn88, Asn95, Asn291, Asn479, and Asn529 are each glycosylated (N-linked (GlcNAc...) asparagine). Residues 568-588 (WVLLAANTLLLLLLLGTAGLF) form a helical membrane-spanning segment. The Cytoplasmic portion of the chain corresponds to 589-603 (AWHLDTPVVRSAGGR). A helical membrane pass occupies residues 604 to 624 (LCFLMLGSLAAGSGSLYGFFG). Over 625–639 (EPTRPACLLRQALFA) the chain is Extracellular. The helical transmembrane segment at 640-660 (LGFTIFLSCLTVRSFQLIIIF) threads the bilayer. Residues 661 to 680 (KFSTKVPTFYHAWVQNHGAG) are Cytoplasmic-facing. The chain crosses the membrane as a helical span at residues 681–701 (LFVMISSAAQLLICLTWLVVW). Topologically, residues 702–725 (TPLPAREYQRFPHLVMLECTETNS) are extracellular. A helical transmembrane segment spans residues 726–746 (LGFILAFLYNGLLSISAFACS). Topologically, residues 747 to 761 (YLGKDLPENYNEAKC) are cytoplasmic. A helical transmembrane segment spans residues 762–782 (VTFSLLFNFVSWIAFFTTASV). Residues 783–795 (YDGKYLPAANMMA) lie on the Extracellular side of the membrane. The helical transmembrane segment at 796 to 816 (GLSSLSSGFGGYFLPKCYVIL) threads the bilayer. The Cytoplasmic portion of the chain corresponds to 817–841 (CRPDLNSTEHFQASIQDYTRRCGST).

This sequence belongs to the G-protein coupled receptor 3 family. TAS1R subfamily. As to quaternary structure, forms heterodimers with TAS1R3.

Its subcellular location is the cell membrane. In terms of biological role, putative taste receptor. TAS1R1/TAS1R3 responds to the umami taste stimulus (the taste of monosodium glutamate). Sequence differences within and between species can significantly influence the selectivity and specificity of taste responses. This chain is Taste receptor type 1 member 1 (TAS1R1), found in Homo sapiens (Human).